Here is a 299-residue protein sequence, read N- to C-terminus: Coenzyme PQQ synthesis protein B (299 aa).

It belongs to the PqqB family.

It participates in cofactor biosynthesis; pyrroloquinoline quinone biosynthesis. Functionally, may be involved in the transport of PQQ or its precursor to the periplasm. This chain is Coenzyme PQQ synthesis protein B, found in Xanthomonas campestris pv. campestris (strain 8004).